A 240-amino-acid chain; its full sequence is 1-(5-phosphoribosyl)-5-[(5-phosphoribosylamino)methylideneamino] imidazole-4-carboxamide isomerase (240 aa).

Catalysis depends on Asp8, which acts as the Proton acceptor. Asp130 serves as the catalytic Proton donor.

Belongs to the HisA/HisF family.

It localises to the cytoplasm. It carries out the reaction 1-(5-phospho-beta-D-ribosyl)-5-[(5-phospho-beta-D-ribosylamino)methylideneamino]imidazole-4-carboxamide = 5-[(5-phospho-1-deoxy-D-ribulos-1-ylimino)methylamino]-1-(5-phospho-beta-D-ribosyl)imidazole-4-carboxamide. It functions in the pathway amino-acid biosynthesis; L-histidine biosynthesis; L-histidine from 5-phospho-alpha-D-ribose 1-diphosphate: step 4/9. In Elusimicrobium minutum (strain Pei191), this protein is 1-(5-phosphoribosyl)-5-[(5-phosphoribosylamino)methylideneamino] imidazole-4-carboxamide isomerase.